Consider the following 622-residue polypeptide: SLAIN motif-containing protein-like (622 aa).

Residues 34–60 (DLKEVQKLHELVKRLEIQNQQLKIKRN) adopt a coiled-coil conformation. Disordered stretches follow at residues 404-441 (HRYS…IQNH) and 473-622 (VRSS…DGCY). Residues 405–415 (RYSPSPLSSPR) are compositionally biased toward low complexity. Composition is skewed to polar residues over residues 416–430 (CQSP…TTSR), 484–502 (QGPS…STPP), 525–591 (VSTS…STVP), and 599–611 (SRRS…MNST).

Belongs to the SLAIN motif-containing family.

This is SLAIN motif-containing protein-like from Xenopus tropicalis (Western clawed frog).